Reading from the N-terminus, the 202-residue chain is MEPVKQIEGRAIPFGRKNVDTDVIIPARWLKTITRQGLGRGAFEALRADPDNIFDSAEFAGSPILIAGDNFGCGSSREHAAWALLDMGVKAVIAPSFSDIFSGNAFKNGILTVVLPQEAIDRLMEVAQTDPVSIDLEAQTVTTPFQDRFSFEIDPFRKHCLANGLDEVGLTMARGDAIATHEARMRESLPFLAKGTDAVAAA.

The protein belongs to the LeuD family. LeuD type 1 subfamily. Heterodimer of LeuC and LeuD.

It carries out the reaction (2R,3S)-3-isopropylmalate = (2S)-2-isopropylmalate. Its pathway is amino-acid biosynthesis; L-leucine biosynthesis; L-leucine from 3-methyl-2-oxobutanoate: step 2/4. Catalyzes the isomerization between 2-isopropylmalate and 3-isopropylmalate, via the formation of 2-isopropylmaleate. This is 3-isopropylmalate dehydratase small subunit from Novosphingobium aromaticivorans (strain ATCC 700278 / DSM 12444 / CCUG 56034 / CIP 105152 / NBRC 16084 / F199).